Here is an 898-residue protein sequence, read N- to C-terminus: Serine/threonine-protein kinase TAO3 (898 aa).

A Protein kinase domain is found at F24–I277. ATP-binding positions include I30–V38 and K53. Residue D147 is the Proton acceptor of the active site. Disordered stretches follow at residues T316 to S375 and D405 to S424. S324 bears the Phosphoserine; by ATM mark. Residues S343, S346, and S349 each carry the phosphoserine modification. A compositionally biased stretch (low complexity) spans S349 to S366. T357 carries the phosphothreonine modification. S359 carries the phosphoserine modification. A compositionally biased stretch (basic and acidic residues) spans D405–P416. S442 carries the post-translational modification Phosphoserine. 3 coiled-coil regions span residues E452–N502, F548–L649, and L754–E871. Residues E565–E596 form a disordered region. K830 carries the post-translational modification N6-acetyllysine.

This sequence belongs to the protein kinase superfamily. STE Ser/Thr protein kinase family. STE20 subfamily. In terms of assembly, self-associates. Interacts with ERN1 and TRAF2. Interaction with TRAF2 is facilitated under ER stress conditions, such as treatment with tunicamycin, and may promote TRAF2 phosphorylation. Interacts (via N-terminus) with STK25; the interaction promotes STK25 abundance at the level of protein expression and/or stability. Post-translationally, autophosphorylated. Phosphorylation at Ser-324 by ATM following DNA damage is required for activation of the p38/MAPK14 stress-activated MAPK cascade. Phosphorylated at Ser-324 and on Tyr residues during T cell activation. Phosphorylated by LRRK2.

It localises to the cytoplasm. The protein resides in the cell membrane. The protein localises to the membrane raft. Its subcellular location is the lipid droplet. It catalyses the reaction L-seryl-[protein] + ATP = O-phospho-L-seryl-[protein] + ADP + H(+). The catalysed reaction is L-threonyl-[protein] + ATP = O-phospho-L-threonyl-[protein] + ADP + H(+). Functionally, serine/threonine-protein kinase that acts as a regulator of the p38/MAPK14 stress-activated MAPK cascade and of the MAPK8/JNK cascade. In response to DNA damage, involved in the G2/M transition DNA damage checkpoint by activating the p38/MAPK14 stress-activated MAPK cascade, probably by mediating phosphorylation of upstream MAP2K3 and MAP2K6 kinases. Inhibits basal activity of the MAPK8/JNK cascade and diminishes its activation in response to epidermal growth factor (EGF). Positively regulates canonical T cell receptor (TCR) signaling by preventing early PTPN6/SHP1-mediated inactivation of LCK, ensuring sustained TCR signaling that is required for optimal activation and differentiation of T cells. Phosphorylates PTPN6/SHP1 on 'Thr-394', leading to its polyubiquitination and subsequent proteasomal degradation. Required for cell surface expression of metalloprotease ADAM10 on type 1 transitional B cells which is necessary for their NOTCH-mediated development into marginal zone B cells. Also required for the NOTCH-mediated terminal differentiation of splenic conventional type 2 dendritic cells. Positively regulates osteoblast differentiation by acting as an upstream activator of the JNK pathway. Promotes JNK signaling in hepatocytes and positively regulates hepatocyte lipid storage by inhibiting beta-oxidation and triacylglycerol secretion while enhancing lipid synthesis. Restricts age-associated inflammation by negatively regulating differentiation of macrophages and their production of pro-inflammatory cytokines. Plays a role in negatively regulating the abundance of regulatory T cells in white adipose tissue. This chain is Serine/threonine-protein kinase TAO3 (Taok3), found in Mus musculus (Mouse).